The chain runs to 449 residues: SWI/SNF chromatin-remodeling accessory subunit 2 (449 aa).

Residues 1–11 (MHSQQRPNPQM) show a composition bias toward polar residues. The interval 1-56 (MHSQQRPNPQMNRHPYGTPGSAPQMRRPGGFAGQPPQMHGPRMVAPPAAPLPKKKK) is disordered. An SWIB/MDM2 domain is found at 223-300 (NHPAKFKLHP…PNKLHQLLQQ (78 aa)).

This sequence belongs to the SMARCD family. Component of the multiprotein chromatin-remodeling complexes SWI/SNF: SWI/SNF-A (BAF), SWI/SNF-B (PBAF) and related complexes. The canonical complex contains a catalytic subunit swsn-4, core subunits swsn-1 and swsn-5, and accessory subunits swsn-3, swsn-6, phf-10, dpff-1, swsn-9 and either ham-3/swsn-2.1 or swsn-2.2.

The protein resides in the nucleus. It localises to the nucleoplasm. The protein localises to the chromosome. Its subcellular location is the nucleus envelope. Involved in transcriptional activation and repression of select genes by chromatin remodeling (alteration of DNA-nucleosome topology). Component of SWI/SNF chromatin remodeling complexes that carry out key enzymatic activities, changing chromatin structure by altering DNA-histone contacts within a nucleosome in an ATP-dependent manner. Probably regulates vulva development through the let-60/Ras pathway. Involved in nuclear reassembly after mitosis and recruitment of nuclear envelope protein, mel-28, to the nuclear periphery in the early embryo and in the adult germline. Involved in gonadogenesis. This chain is SWI/SNF chromatin-remodeling accessory subunit 2, found in Caenorhabditis elegans.